The sequence spans 623 residues: Glutathione import ATP-binding protein GsiA (623 aa).

2 ABC transporter domains span residues Val-15–Leu-269 and Leu-314–Leu-564. Residues Gly-49–Ser-56 and Gly-357–Ser-364 contribute to the ATP site.

It belongs to the ABC transporter superfamily. Glutathione importer (TC 3.A.1.5.11) family. In terms of assembly, the complex is composed of two ATP-binding proteins (GsiA), two transmembrane proteins (GsiC and GsiD) and a solute-binding protein (GsiB).

The protein localises to the cell inner membrane. It catalyses the reaction glutathione(out) + ATP + H2O = glutathione(in) + ADP + phosphate + H(+). Its function is as follows. Part of the ABC transporter complex GsiABCD involved in glutathione import. Responsible for energy coupling to the transport system. The protein is Glutathione import ATP-binding protein GsiA of Escherichia coli O1:K1 / APEC.